The sequence spans 380 residues: Flap endonuclease 1 (380 aa).

The tract at residues 1-104 (MGIQGLAKLI…GELAKRAERR (104 aa)) is N-domain. Asp-34 contributes to the Mg(2+) binding site. Residues Arg-47 and Arg-70 each coordinate DNA. Asp-86, Glu-158, Glu-160, Asp-179, and Asp-181 together coordinate Mg(2+). The segment at 122-253 (DVNKFQKRLV…KRAIELIRQY (132 aa)) is I-domain. Glu-158 serves as a coordination point for DNA. DNA-binding residues include Gly-231 and Asp-233. Asp-233 is a Mg(2+) binding site. The segment at 328-380 (LKNARHTSTQGRLDSFFKVMSSPSVKRKEPPKGAKGSASKKAKMSGGKFKKPK) is disordered. The segment at 336 to 344 (TQGRLDSFF) is interaction with PCNA. A compositionally biased stretch (basic residues) spans 365 to 380 (ASKKAKMSGGKFKKPK).

Belongs to the XPG/RAD2 endonuclease family. FEN1 subfamily. In terms of assembly, interacts with PCNA. Three molecules of FEN1 bind to one PCNA trimer with each molecule binding to one PCNA monomer. PCNA stimulates the nuclease activity without altering cleavage specificity. The cofactor is Mg(2+). Post-translationally, phosphorylated. Phosphorylation upon DNA damage induces relocalization to the nuclear plasma.

It localises to the nucleus. It is found in the nucleolus. The protein resides in the nucleoplasm. The protein localises to the mitochondrion. Functionally, structure-specific nuclease with 5'-flap endonuclease and 5'-3' exonuclease activities involved in DNA replication and repair. During DNA replication, cleaves the 5'-overhanging flap structure that is generated by displacement synthesis when DNA polymerase encounters the 5'-end of a downstream Okazaki fragment. It enters the flap from the 5'-end and then tracks to cleave the flap base, leaving a nick for ligation. Also involved in the long patch base excision repair (LP-BER) pathway, by cleaving within the apurinic/apyrimidinic (AP) site-terminated flap. Acts as a genome stabilization factor that prevents flaps from equilibrating into structures that lead to duplications and deletions. Also possesses 5'-3' exonuclease activity on nicked or gapped double-stranded DNA, and exhibits RNase H activity. Also involved in replication and repair of rDNA and in repairing mitochondrial DNA. This is Flap endonuclease 1 from Branchiostoma floridae (Florida lancelet).